A 171-amino-acid polypeptide reads, in one-letter code: Phosphopantetheine adenylyltransferase (171 aa).

Substrate is bound at residue T9. ATP contacts are provided by residues 9 to 10 (TF) and H17. Substrate-binding residues include K41, L73, and R87. Residues 88 to 90 (GLR), E98, and 123 to 129 (YQFISGT) each bind ATP.

This sequence belongs to the bacterial CoaD family. Homohexamer. The cofactor is Mg(2+).

Its subcellular location is the cytoplasm. The catalysed reaction is (R)-4'-phosphopantetheine + ATP + H(+) = 3'-dephospho-CoA + diphosphate. Its pathway is cofactor biosynthesis; coenzyme A biosynthesis; CoA from (R)-pantothenate: step 4/5. Reversibly transfers an adenylyl group from ATP to 4'-phosphopantetheine, yielding dephospho-CoA (dPCoA) and pyrophosphate. In Paraburkholderia xenovorans (strain LB400), this protein is Phosphopantetheine adenylyltransferase.